Reading from the N-terminus, the 488-residue chain is 3-octaprenyl-4-hydroxybenzoate carboxy-lyase (488 aa).

A Mn(2+)-binding site is contributed by Asn-172. Prenylated FMN-binding positions include 175–177 (IYR), 189–191 (RWL), and 194–195 (RG). Position 238 (Glu-238) interacts with Mn(2+). Residue Asp-287 is the Proton donor of the active site.

The protein belongs to the UbiD family. In terms of assembly, homohexamer. Requires prenylated FMN as cofactor. Mn(2+) is required as a cofactor.

Its subcellular location is the cell membrane. The enzyme catalyses a 4-hydroxy-3-(all-trans-polyprenyl)benzoate + H(+) = a 2-(all-trans-polyprenyl)phenol + CO2. The protein operates within cofactor biosynthesis; ubiquinone biosynthesis. Its function is as follows. Catalyzes the decarboxylation of 3-octaprenyl-4-hydroxy benzoate to 2-octaprenylphenol, an intermediate step in ubiquinone biosynthesis. The chain is 3-octaprenyl-4-hydroxybenzoate carboxy-lyase from Pseudoalteromonas translucida (strain TAC 125).